Consider the following 847-residue polypeptide: KN motif and ankyrin repeat domain-containing protein 2 (847 aa).

The tract at residues 1–32 (MAQVLHVPAPFPGTPGQASSAAFPNKEPDPPY) is disordered. The interaction with AIFM1 stretch occupies residues 1–72 (MAQVLHVPAP…PVQRRPRLGS (72 aa)). Ser19, Ser83, Ser86, Ser89, and Ser92 each carry phosphoserine. Residue Arg105 is modified to Omega-N-methylarginine. Residues 161–182 (LAGVGLLPPTPRSSGLSTPVAP) form a disordered region. A Phosphothreonine modification is found at Thr170. 2 coiled-coil regions span residues 187-207 (LAHV…LEEQ) and 284-311 (EAAL…AQTQ). Thr331 carries the phosphothreonine modification. Phosphoserine is present on Ser358. Disordered regions lie at residues 414–473 (GAAR…GGAS) and 502–581 (NGGY…PEEE). Positions 420–433 (DPPPSPAEPSPSSP) are enriched in pro residues. Composition is skewed to low complexity over residues 434–446 (YPAA…APAA) and 506–516 (ESSSEDSSTAE). Ser536 carries the phosphoserine modification. The ANK 0; degenerate repeat unit spans residues 610-647 (RELKVAYTTVLQEWLRLACRSDAHPELVRRHLVTFRAM). ANK repeat units lie at residues 662–692 (NGNT…QVDK), 696–729 (AGYS…NVNA), 734–763 (AGQT…DVNM), 767–797 (DGST…DISL), and 801–831 (DGST…KCSF). The tract at residues 665–831 (TALHYSVSHA…YSRMNIKCSF (167 aa)) is interaction with NCOA1.

Interacts (non-phosphorylated form) with NCOA1; NCOA2 AND NCOA3. Interacts with AIFM1. Interacts with ARHGDIA; the interaction is direct and may regulate the interaction of ARHGDIA with RHOA, RAC1 and CDC42. Interacts (via ANK repeats 1-5) with KIF21A. Phosphorylated by casein kinase II upon estrogen stimulation. Phosphorylation induces the release by KANK2 of NCOA1 and its translocation to the nucleus where NCOA1 can activate gene transcription. In terms of tissue distribution, expressed by podocytes in kidney glomeruli (at protein level).

It is found in the cytoplasm. The protein localises to the mitochondrion. In terms of biological role, involved in transcription regulation by sequestering in the cytoplasm nuclear receptor coactivators such as NCOA1, NCOA2 and NCOA3. Involved in regulation of caspase-independent apoptosis by sequestering the proapoptotic factor AIFM1 in mitochondria. Pro-apoptotic stimuli can induce its proteasomal degradation allowing the translocation of AIFM1 to the nucleus to induce apoptosis. Involved in the negative control of vitamin D receptor signaling pathway. Involved in actin stress fibers formation through its interaction with ARHGDIA and the regulation of the Rho signaling pathway. May thereby play a role in cell adhesion and migration, regulating for instance podocytes migration during development of the kidney. Through the Rho signaling pathway may also regulate cell proliferation. The chain is KN motif and ankyrin repeat domain-containing protein 2 from Rattus norvegicus (Rat).